A 180-amino-acid chain; its full sequence is Large ribosomal subunit protein uL5 (180 aa).

This sequence belongs to the universal ribosomal protein uL5 family. Part of the 50S ribosomal subunit; part of the 5S rRNA/L5/L18/L25 subcomplex. Contacts the 5S rRNA and the P site tRNA. Forms a bridge to the 30S subunit in the 70S ribosome.

Functionally, this is one of the proteins that bind and probably mediate the attachment of the 5S RNA into the large ribosomal subunit, where it forms part of the central protuberance. In the 70S ribosome it contacts protein S13 of the 30S subunit (bridge B1b), connecting the 2 subunits; this bridge is implicated in subunit movement. Contacts the P site tRNA; the 5S rRNA and some of its associated proteins might help stabilize positioning of ribosome-bound tRNAs. This chain is Large ribosomal subunit protein uL5, found in Cupriavidus necator (strain ATCC 17699 / DSM 428 / KCTC 22496 / NCIMB 10442 / H16 / Stanier 337) (Ralstonia eutropha).